Consider the following 548-residue polypeptide: 2-succinyl-5-enolpyruvyl-6-hydroxy-3-cyclohexene-1-carboxylate synthase (548 aa).

It belongs to the TPP enzyme family. MenD subfamily. In terms of assembly, homodimer. It depends on Mg(2+) as a cofactor. Mn(2+) serves as cofactor. The cofactor is thiamine diphosphate.

It carries out the reaction isochorismate + 2-oxoglutarate + H(+) = 5-enolpyruvoyl-6-hydroxy-2-succinyl-cyclohex-3-ene-1-carboxylate + CO2. The protein operates within quinol/quinone metabolism; 1,4-dihydroxy-2-naphthoate biosynthesis; 1,4-dihydroxy-2-naphthoate from chorismate: step 2/7. It participates in quinol/quinone metabolism; menaquinone biosynthesis. Catalyzes the thiamine diphosphate-dependent decarboxylation of 2-oxoglutarate and the subsequent addition of the resulting succinic semialdehyde-thiamine pyrophosphate anion to isochorismate to yield 2-succinyl-5-enolpyruvyl-6-hydroxy-3-cyclohexene-1-carboxylate (SEPHCHC). The sequence is that of 2-succinyl-5-enolpyruvyl-6-hydroxy-3-cyclohexene-1-carboxylate synthase from Mycobacterium ulcerans (strain Agy99).